A 335-amino-acid chain; its full sequence is Biotin synthase (335 aa).

One can recognise a Radical SAM core domain in the interval 46–274 (YDIQLASLFS…ESKIRLSAGR (229 aa)). [4Fe-4S] cluster-binding residues include Cys-61, Cys-65, and Cys-68. Residues Cys-105, Cys-137, Cys-197, and Arg-269 each coordinate [2Fe-2S] cluster.

The protein belongs to the radical SAM superfamily. Biotin synthase family. In terms of assembly, homodimer. [4Fe-4S] cluster serves as cofactor. The cofactor is [2Fe-2S] cluster.

The enzyme catalyses (4R,5S)-dethiobiotin + (sulfur carrier)-SH + 2 reduced [2Fe-2S]-[ferredoxin] + 2 S-adenosyl-L-methionine = (sulfur carrier)-H + biotin + 2 5'-deoxyadenosine + 2 L-methionine + 2 oxidized [2Fe-2S]-[ferredoxin]. It functions in the pathway cofactor biosynthesis; biotin biosynthesis; biotin from 7,8-diaminononanoate: step 2/2. Catalyzes the conversion of dethiobiotin (DTB) to biotin by the insertion of a sulfur atom into dethiobiotin via a radical-based mechanism. The chain is Biotin synthase from Prochlorococcus marinus (strain MIT 9301).